The primary structure comprises 1387 residues: DNA-directed RNA polymerase subunit beta'' (1387 aa).

Residues Cys-224, Cys-295, Cys-302, and Cys-305 each coordinate Zn(2+).

This sequence belongs to the RNA polymerase beta' chain family. RpoC2 subfamily. In plastids the minimal PEP RNA polymerase catalytic core is composed of four subunits: alpha, beta, beta', and beta''. When a (nuclear-encoded) sigma factor is associated with the core the holoenzyme is formed, which can initiate transcription. Zn(2+) is required as a cofactor.

The protein localises to the plastid. Its subcellular location is the chloroplast. The catalysed reaction is RNA(n) + a ribonucleoside 5'-triphosphate = RNA(n+1) + diphosphate. Its function is as follows. DNA-dependent RNA polymerase catalyzes the transcription of DNA into RNA using the four ribonucleoside triphosphates as substrates. This Panax ginseng (Korean ginseng) protein is DNA-directed RNA polymerase subunit beta''.